The primary structure comprises 500 residues: Glycerol kinase (500 aa).

An ADP-binding site is contributed by T12. T12, T13, and S14 together coordinate ATP. Sn-glycerol 3-phosphate is bound at residue T12. R16 is an ADP binding site. Positions 82, 83, 134, and 246 each coordinate sn-glycerol 3-phosphate. Glycerol is bound by residues R82, E83, Y134, D246, and Q247. ADP-binding residues include T268 and G312. ATP contacts are provided by T268, G312, Q316, and G413. Residues G413 and N417 each contribute to the ADP site.

This sequence belongs to the FGGY kinase family.

The catalysed reaction is glycerol + ATP = sn-glycerol 3-phosphate + ADP + H(+). The protein operates within polyol metabolism; glycerol degradation via glycerol kinase pathway; sn-glycerol 3-phosphate from glycerol: step 1/1. Its activity is regulated as follows. Inhibited by fructose 1,6-bisphosphate (FBP). Its function is as follows. Key enzyme in the regulation of glycerol uptake and metabolism. Catalyzes the phosphorylation of glycerol to yield sn-glycerol 3-phosphate. In Saccharopolyspora erythraea (strain ATCC 11635 / DSM 40517 / JCM 4748 / NBRC 13426 / NCIMB 8594 / NRRL 2338), this protein is Glycerol kinase.